Consider the following 67-residue polypeptide: Probable Sec-independent protein translocase protein TatE (67 aa).

The helical transmembrane segment at 4 to 21 threads the bilayer; the sequence is ISITKLLVVAALVVLLFG. The segment at 46–67 is disordered; that stretch reads EDAGAKKEAGGDIQAEKLSHKE.

It belongs to the TatA/E family. TatE subfamily.

The protein resides in the cell inner membrane. Its function is as follows. Part of the twin-arginine translocation (Tat) system that transports large folded proteins containing a characteristic twin-arginine motif in their signal peptide across membranes. TatE shares overlapping functions with TatA. The sequence is that of Probable Sec-independent protein translocase protein TatE from Citrobacter koseri (strain ATCC BAA-895 / CDC 4225-83 / SGSC4696).